A 78-amino-acid chain; its full sequence is Omega-conotoxin-like ArMKLT1-011 (78 aa).

An N-terminal signal peptide occupies residues 1-22; that stretch reads MKLTCMMIVAVLFLTAWTSVTA. The propeptide occupies 23–48; that stretch reads VNTRGELENLFLRASHEMNSEASKLD. Intrachain disulfides connect Cys52–Cys69, Cys59–Cys73, and Cys68–Cys77.

Belongs to the conotoxin O1 superfamily. Expressed by the venom duct.

Its subcellular location is the secreted. Omega-conotoxins act at presynaptic membranes, they bind and block voltage-gated calcium channels (Cav). The polypeptide is Omega-conotoxin-like ArMKLT1-011 (Conus arenatus (Sand-dusted cone)).